Consider the following 158-residue polypeptide: Molybdopterin synthase catalytic subunit (158 aa).

Substrate-binding positions include 107–108 (HR), Lys123, and 130–132 (KKE).

The protein belongs to the MoaE family. MOCS2B subfamily. In terms of assembly, heterotetramer; composed of 2 small (mocs2s) and 2 large (mocs2l) subunits.

Its subcellular location is the cytoplasm. It catalyses the reaction 2 [molybdopterin-synthase sulfur-carrier protein]-C-terminal-Gly-aminoethanethioate + cyclic pyranopterin phosphate + H2O = molybdopterin + 2 [molybdopterin-synthase sulfur-carrier protein]-C-terminal Gly-Gly + 2 H(+). It participates in cofactor biosynthesis; molybdopterin biosynthesis. Its function is as follows. Catalytic subunit of the molybdopterin synthase complex, a complex that catalyzes the conversion of precursor Z into molybdopterin. Acts by mediating the incorporation of 2 sulfur atoms from thiocarboxylated mocs2s into precursor Z to generate a dithiolene group. This is Molybdopterin synthase catalytic subunit (mocs2l) from Dictyostelium discoideum (Social amoeba).